Here is a 471-residue protein sequence, read N- to C-terminus: Putative ETHYLENE INSENSITIVE 3-like 4 protein (471 aa).

The segment at 280–316 is disordered; sequence DLKISEDQDDQESSGSKRKSESMEPSKSVYTCQNSSC. Over residues 304–316 the composition is skewed to polar residues; that stretch reads PSKSVYTCQNSSC.

The protein belongs to the EIN3 family.

The protein localises to the nucleus. Its function is as follows. Putative transcription factor that may be involved in the ethylene response pathway. This chain is Putative ETHYLENE INSENSITIVE 3-like 4 protein (EIL4), found in Arabidopsis thaliana (Mouse-ear cress).